A 221-amino-acid chain; its full sequence is ATP-dependent dethiobiotin synthetase BioD (221 aa).

12 to 17 (EVGKTV) contributes to the ATP binding site. Mg(2+) is bound at residue T16. Residue K39 is part of the active site. Residue T43 coordinates substrate. ATP-binding positions include D47, 105–108 (EGLG), and 165–166 (SC). Mg(2+) is bound by residues D47 and E105.

It belongs to the dethiobiotin synthetase family. In terms of assembly, homodimer. Mg(2+) serves as cofactor.

The protein localises to the cytoplasm. It carries out the reaction (7R,8S)-7,8-diammoniononanoate + CO2 + ATP = (4R,5S)-dethiobiotin + ADP + phosphate + 3 H(+). The catalysed reaction is (7R,8S)-8-amino-7-(carboxyamino)nonanoate + ATP = (4R,5S)-dethiobiotin + ADP + phosphate + H(+). Its pathway is cofactor biosynthesis; biotin biosynthesis; biotin from 7,8-diaminononanoate: step 1/2. In terms of biological role, catalyzes a mechanistically unusual reaction, the ATP-dependent insertion of CO2 between the N7 and N8 nitrogen atoms of 7,8-diaminopelargonic acid (DAPA, also called 7,8-diammoniononanoate) to form a ureido ring. This cyanobacterium does not encode bioA (which catalyzes the formation of the precursor for this reaction in the cannonical pathway), instead it encodes bioU, which replaces bioA and also performs the first half of the cannonical BioD reaction. Thus in this organism BioD has a different substrate. This is ATP-dependent dethiobiotin synthetase BioD from Crocosphaera subtropica (strain ATCC 51142 / BH68) (Cyanothece sp. (strain ATCC 51142)).